The sequence spans 354 residues: uncharacterized protein (354 aa).

This sequence to yeast YHR056c.

This is an uncharacterized protein from Saccharomyces cerevisiae (strain ATCC 204508 / S288c) (Baker's yeast).